A 274-amino-acid polypeptide reads, in one-letter code: Bis(5'-nucleosyl)-tetraphosphatase, symmetrical (274 aa).

Belongs to the Ap4A hydrolase family.

It carries out the reaction P(1),P(4)-bis(5'-adenosyl) tetraphosphate + H2O = 2 ADP + 2 H(+). Functionally, hydrolyzes diadenosine 5',5'''-P1,P4-tetraphosphate to yield ADP. This Buchnera aphidicola subsp. Acyrthosiphon pisum (strain APS) (Acyrthosiphon pisum symbiotic bacterium) protein is Bis(5'-nucleosyl)-tetraphosphatase, symmetrical (apaH).